The chain runs to 341 residues: Phosphoribosylformylglycinamidine cyclo-ligase (341 aa).

This sequence belongs to the AIR synthase family.

It localises to the cytoplasm. It carries out the reaction 2-formamido-N(1)-(5-O-phospho-beta-D-ribosyl)acetamidine + ATP = 5-amino-1-(5-phospho-beta-D-ribosyl)imidazole + ADP + phosphate + H(+). It participates in purine metabolism; IMP biosynthesis via de novo pathway; 5-amino-1-(5-phospho-D-ribosyl)imidazole from N(2)-formyl-N(1)-(5-phospho-D-ribosyl)glycinamide: step 2/2. The sequence is that of Phosphoribosylformylglycinamidine cyclo-ligase from Xanthomonas axonopodis pv. citri (strain 306).